The primary structure comprises 309 residues: Protein FdhE (309 aa).

It belongs to the FdhE family.

It localises to the cytoplasm. Necessary for formate dehydrogenase activity. The chain is Protein FdhE from Escherichia coli (strain K12 / MC4100 / BW2952).